The chain runs to 167 residues: Ubiquitin-fold modifier-conjugating enzyme 1 (167 aa).

Cys116 functions as the Glycyl thioester intermediate in the catalytic mechanism.

It belongs to the ubiquitin-conjugating enzyme family. UFC1 subfamily. In terms of assembly, interacts with UBA5 (via C-terminus). Interacts with UFL1. Interacts with UFM1.

Functionally, E2-like enzyme which specifically catalyzes the second step in ufmylation. Accepts the ubiquitin-like modifier UFM1 from the E1 enzyme UBA5 and forms an intermediate with UFM1 via a thioester linkage. Ufmylation is involved in various processes, such as ribosome recycling, response to DNA damage, interferon response or reticulophagy (also called ER-phagy). This Salmo salar (Atlantic salmon) protein is Ubiquitin-fold modifier-conjugating enzyme 1.